The following is a 125-amino-acid chain: Glycoprotein hormones alpha chain (125 aa).

A signal peptide spans 1–30 (MVSAVTTMGCMKAAGVSLLLLYFLLNAADS). 5 disulfides stabilise this stretch: Cys-41–Cys-64, Cys-44–Cys-93, Cys-61–Cys-114, Cys-65–Cys-116, and Cys-92–Cys-119. Asn-85 and Asn-110 each carry an N-linked (GlcNAc...) asparagine glycan.

Belongs to the glycoprotein hormones subunit alpha family. Heterodimer. Glycoprotein hormones are heterodimers composed of a common alpha chain described here and a unique beta chain which confers their biological specificity to the different hormones.

It localises to the secreted. Shared alpha chain of heterodimeric glycoprotein hormones. These hormones bind specific receptors on target cells that in turn activate downstream signaling pathways. Involved in gametogenesis and steroidogenesis. The chain is Glycoprotein hormones alpha chain (cga) from Fundulus heteroclitus (Killifish).